The following is a 170-amino-acid chain: Photosystem II extrinsic protein V (170 aa).

Positions 1 to 33 (MVSVFSSLRQSFKGLLVLVPVLIGLAFISPAEA) are cleaved as a signal peptide. Residues Cys70, Cys73, His74, and Met137 each coordinate heme c.

The protein belongs to the cytochrome c family. PsbV subfamily. In terms of assembly, PSII is composed of 1 copy each of membrane proteins PsbA, PsbB, PsbC, PsbD, PsbE, PsbF, PsbH, PsbI, PsbJ, PsbK, PsbL, PsbM, PsbT, PsbX, PsbY, PsbZ, Psb30/Ycf12, peripheral proteins PsbO, CyanoQ (PsbQ), PsbU, PsbV and a large number of cofactors. It forms dimeric complexes. The cofactor is heme c.

The protein localises to the cellular thylakoid membrane. Functionally, one of the extrinsic, lumenal subunits of photosystem II (PSII). PSII is a light-driven water plastoquinone oxidoreductase, using light energy to abstract electrons from H(2)O, generating a proton gradient subsequently used for ATP formation. The extrinsic proteins stabilize the structure of photosystem II oxygen-evolving complex (OEC), the ion environment of oxygen evolution and protect the OEC against heat-induced inactivation. Low-potential cytochrome c that plays a role in the OEC of PSII. This is Photosystem II extrinsic protein V from Synechococcus sp. (strain CC9902).